Reading from the N-terminus, the 142-residue chain is ATP synthase epsilon chain (142 aa).

This sequence belongs to the ATPase epsilon chain family. F-type ATPases have 2 components, CF(1) - the catalytic core - and CF(0) - the membrane proton channel. CF(1) has five subunits: alpha(3), beta(3), gamma(1), delta(1), epsilon(1). CF(0) has three main subunits: a, b and c.

The protein resides in the cell inner membrane. In terms of biological role, produces ATP from ADP in the presence of a proton gradient across the membrane. This Haemophilus influenzae (strain 86-028NP) protein is ATP synthase epsilon chain.